A 194-amino-acid chain; its full sequence is Peptidyl-tRNA hydrolase (194 aa).

Position 17 (Y17) interacts with tRNA. H22 (proton acceptor) is an active-site residue. Positions 68, 70, and 116 each coordinate tRNA.

It belongs to the PTH family. Monomer.

Its subcellular location is the cytoplasm. The enzyme catalyses an N-acyl-L-alpha-aminoacyl-tRNA + H2O = an N-acyl-L-amino acid + a tRNA + H(+). Functionally, hydrolyzes ribosome-free peptidyl-tRNAs (with 1 or more amino acids incorporated), which drop off the ribosome during protein synthesis, or as a result of ribosome stalling. Its function is as follows. Catalyzes the release of premature peptidyl moieties from peptidyl-tRNA molecules trapped in stalled 50S ribosomal subunits, and thus maintains levels of free tRNAs and 50S ribosomes. This chain is Peptidyl-tRNA hydrolase, found in Haemophilus influenzae (strain ATCC 51907 / DSM 11121 / KW20 / Rd).